We begin with the raw amino-acid sequence, 145 residues long: D-aminoacyl-tRNA deacylase (145 aa).

The Gly-cisPro motif, important for rejection of L-amino acids motif lies at 137–138 (GP).

This sequence belongs to the DTD family. In terms of assembly, homodimer.

It is found in the cytoplasm. The catalysed reaction is glycyl-tRNA(Ala) + H2O = tRNA(Ala) + glycine + H(+). The enzyme catalyses a D-aminoacyl-tRNA + H2O = a tRNA + a D-alpha-amino acid + H(+). An aminoacyl-tRNA editing enzyme that deacylates mischarged D-aminoacyl-tRNAs. Also deacylates mischarged glycyl-tRNA(Ala), protecting cells against glycine mischarging by AlaRS. Acts via tRNA-based rather than protein-based catalysis; rejects L-amino acids rather than detecting D-amino acids in the active site. By recycling D-aminoacyl-tRNA to D-amino acids and free tRNA molecules, this enzyme counteracts the toxicity associated with the formation of D-aminoacyl-tRNA entities in vivo and helps enforce protein L-homochirality. The polypeptide is D-aminoacyl-tRNA deacylase (Idiomarina loihiensis (strain ATCC BAA-735 / DSM 15497 / L2-TR)).